Consider the following 414-residue polypeptide: MAALRYAGLDDTDSEDELPPGWEERTTKDGWVYYANHTEEKTQWEHPKTGKRKRVAGDLPYGWEQETDENGQVFFVDHINKRTTYLDPRLAFTVDDNPTKPTTRQRYDGSTTAMEILQGRDFTGKVVVVTGANSGIGFETAKSFALHGAHVILACRNMARASEAVSRILEEWHKAKVEAMTLDLALLRSVQHFAEAFKAKNVPLHVLVCNAATFALPWSLTKDGLETTFQVNHLGHFYLVQLLQDVLCRSAPARVIVVSSESHRFTDINDSLGKLDFSRLSPTKNDYWAMLAYNRSKLCNILFSNELHRRLSPRGVTSNAVHPGNMMYSNIHRSWWVYTLLFTLARPFTKSMQQGAATTVYCAAVPELEGLGGMYFNNCCRCMPSPEAQSEETARTLWALSERLIQERLGSQSG.

Residues 1–23 (MAALRYAGLDDTDSEDELPPGWE) are disordered. A Phosphothreonine modification is found at Thr12. Phosphoserine is present on Ser14. In terms of domain architecture, WW 1 spans 16–49 (DELPPGWEERTTKDGWVYYANHTEEKTQWEHPKT). A Phosphotyrosine modification is found at Tyr33. Positions 50-55 (GKRKRV) match the Nuclear localization signal motif. A WW 2 domain is found at 57–90 (GDLPYGWEQETDENGQVFFVDHINKRTTYLDPRL). Residues 125–414 (KVVVVTGANS…IQERLGSQSG (290 aa)) are interaction with MAPT. Position 131–137 (131–137 (GANSGIG)) interacts with NADP(+). Residues 209–273 (CNAATFALPW…RFTDINDSLG (65 aa)) are mediates targeting to the mitochondria. Substrate is bound at residue Ser260. At Tyr287 the chain carries Phosphotyrosine; by TNK2. Tyr293 (proton acceptor) is an active-site residue.

Belongs to the short-chain dehydrogenases/reductases (SDR) family. In terms of assembly, interacts with TP53, p73/TP73 and MAPK8. Interacts with MAPT/TAU, RUNX2 and HYAL2. Forms a ternary complex with TP53 and MDM2. Interacts with ERBB4, LITAF and WBP1. Interacts with DVL1, DVL2 and DVL3. May interact with FAM189B and SCOTIN. Interacts with TNK2. Interacts with TMEM207. Interacts (via WW domain) with VOPP1. Post-translationally, phosphorylated upon genotoxic stress. Phosphorylation of Tyr-33 regulates interaction with TP53, TP73 and MAPK8. May also regulate proapoptotic activity. Phosphorylation by TNK2 is associated with polyubiquitination and degradation. In terms of processing, ubiquitinated when phosphorylated by TNK2, leading to its degradation. In terms of tissue distribution, widely expressed. Strongly expressed in testis, prostate, and ovary. Overexpressed in cancer cell lines. Isoform 5 and isoform 6 may only be expressed in tumor cell lines.

The protein resides in the cytoplasm. It is found in the nucleus. The protein localises to the mitochondrion. It localises to the golgi apparatus. Its subcellular location is the lysosome. Functionally, putative oxidoreductase. Acts as a tumor suppressor and plays a role in apoptosis. Required for normal bone development. May function synergistically with p53/TP53 to control genotoxic stress-induced cell death. Plays a role in TGFB1 signaling and TGFB1-mediated cell death. May also play a role in tumor necrosis factor (TNF)-mediated cell death. Inhibits Wnt signaling, probably by sequestering DVL2 in the cytoplasm. The polypeptide is WW domain-containing oxidoreductase (WWOX) (Homo sapiens (Human)).